The chain runs to 329 residues: Ketol-acid reductoisomerase (NADP(+)) (329 aa).

In terms of domain architecture, KARI N-terminal Rossmann spans 2–182 (TQLFYDTDAD…GGTRAGILET (181 aa)). Residues 25–28 (YGSQ), Ser-51, Ser-53, and 83–86 (DEFQ) contribute to the NADP(+) site. Residue His-108 is part of the active site. Residue Gly-134 coordinates NADP(+). The region spanning 183–328 (NFKEETETDL…KGLRSMFSWL (146 aa)) is the KARI C-terminal knotted domain. Mg(2+) is bound by residues Asp-191, Glu-195, Glu-227, and Glu-231. Ser-252 serves as a coordination point for substrate.

The protein belongs to the ketol-acid reductoisomerase family. Mg(2+) is required as a cofactor.

The catalysed reaction is (2R)-2,3-dihydroxy-3-methylbutanoate + NADP(+) = (2S)-2-acetolactate + NADPH + H(+). The enzyme catalyses (2R,3R)-2,3-dihydroxy-3-methylpentanoate + NADP(+) = (S)-2-ethyl-2-hydroxy-3-oxobutanoate + NADPH + H(+). Its pathway is amino-acid biosynthesis; L-isoleucine biosynthesis; L-isoleucine from 2-oxobutanoate: step 2/4. It functions in the pathway amino-acid biosynthesis; L-valine biosynthesis; L-valine from pyruvate: step 2/4. Involved in the biosynthesis of branched-chain amino acids (BCAA). Catalyzes an alkyl-migration followed by a ketol-acid reduction of (S)-2-acetolactate (S2AL) to yield (R)-2,3-dihydroxy-isovalerate. In the isomerase reaction, S2AL is rearranged via a Mg-dependent methyl migration to produce 3-hydroxy-3-methyl-2-ketobutyrate (HMKB). In the reductase reaction, this 2-ketoacid undergoes a metal-dependent reduction by NADPH to yield (R)-2,3-dihydroxy-isovalerate. The protein is Ketol-acid reductoisomerase (NADP(+)) of Prochlorococcus marinus (strain MIT 9312).